A 64-amino-acid chain; its full sequence is Potassium channel toxin alpha-KTx J123 (64 aa).

Residues 1 to 21 form the signal peptide; it reads MNKVYLVAVLVLFLALTINES. Intrachain disulfides connect Cys30-Cys52, Cys37-Cys60, and Cys41-Cys62.

This sequence belongs to the short scorpion toxin superfamily. Potassium channel inhibitor family. Alpha-KTx 11 subfamily. Expressed by the venom gland.

The protein localises to the secreted. This recombinant toxin inhibits mammalian voltage-gated potassium channels Kv1.3/KCNA3 (IC(50)=0.79 nM) and Kv1.2/KCNA2 (IC(50)=26.4 nM). This chain is Potassium channel toxin alpha-KTx J123, found in Olivierus martensii (Manchurian scorpion).